The chain runs to 252 residues: Chitooligosaccharide deacetylase (252 aa).

The Mg(2+) site is built by His61 and His125.

Belongs to the YdjC deacetylase family. ChbG subfamily. In terms of assembly, homodimer. Requires Mg(2+) as cofactor.

It localises to the cytoplasm. The enzyme catalyses N,N'-diacetylchitobiose + H2O = N-acetyl-beta-D-glucosaminyl-(1-&gt;4)-D-glucosamine + acetate. The catalysed reaction is diacetylchitobiose-6'-phosphate + H2O = N'-monoacetylchitobiose-6'-phosphate + acetate. The protein operates within glycan degradation; chitin degradation. Functionally, involved in the degradation of chitin. ChbG is essential for growth on the acetylated chitooligosaccharides chitobiose and chitotriose but is dispensable for growth on cellobiose and chitosan dimer, the deacetylated form of chitobiose. Deacetylation of chitobiose-6-P and chitotriose-6-P is necessary for both the activation of the chb promoter by the regulatory protein ChbR and the hydrolysis of phosphorylated beta-glucosides by the phospho-beta-glucosidase ChbF. Catalyzes the removal of only one acetyl group from chitobiose-6-P to yield monoacetylchitobiose-6-P, the inducer of ChbR and the substrate of ChbF. The polypeptide is Chitooligosaccharide deacetylase (Escherichia coli O6:K15:H31 (strain 536 / UPEC)).